Consider the following 413-residue polypeptide: Putative acid phosphatase 11 (413 aa).

The active-site Nucleophile is histidine 35. Aspartate 315 acts as the Proton donor in catalysis. Cysteine 381 and cysteine 387 are oxidised to a cystine.

It belongs to the histidine acid phosphatase family.

The enzyme catalyses a phosphate monoester + H2O = an alcohol + phosphate. This Caenorhabditis elegans protein is Putative acid phosphatase 11 (pho-11).